We begin with the raw amino-acid sequence, 284 residues long: MDAIKKKMLAMKMEKENAVDRAEQNEQKLRDTEEQKAKIEEDLNNLQKKCANLENDFDSVNEQVQVAMAKLETSEKRVTEMEQEVSGTTRKITLLEEDLERNEERLQTATERLEEASKLPDESERGARVLESRSLADDERIDQLEAQLKEAKYIAEDAERKYDEAARKLAITEVDLERAEARPKAAEAKILELEEELKVVGNNTKSLEISEQEASQREDSYEETIRDLTQRLKDAENRATEAERTVSKLQKEVDRLEDELLAEKEKYKAISDELDQTFAELAGY.

Residues 1-284 (MDAIKKKMLA…DQTFAELAGY (284 aa)) are a coiled coil. Residues 202–213 (NNTKSLEISEQE) show a composition bias toward polar residues. Residues 202–223 (NNTKSLEISEQEASQREDSYEE) form a disordered region. Basic and acidic residues predominate over residues 214–223 (ASQREDSYEE).

Belongs to the tropomyosin family. Homodimer.

Tropomyosin, in association with the troponin complex, plays a central role in the calcium dependent regulation of muscle contraction. This is Tropomyosin from Haliotis rufescens (California red abalone).